A 432-amino-acid chain; its full sequence is Adenylosuccinate synthetase (432 aa).

GTP is bound by residues 13-19 and 41-43; these read GDEGKGK and GHT. Asp-14 functions as the Proton acceptor in the catalytic mechanism. 2 residues coordinate Mg(2+): Asp-14 and Gly-41. IMP-binding positions include 14-17, 39-42, Thr-130, Arg-144, Gln-225, Thr-240, and Arg-304; these read DEGK and NAGH. His-42 functions as the Proton donor in the catalytic mechanism. Substrate is bound at residue 300-306; sequence AVTGRPR. GTP contacts are provided by residues Arg-306, 332-334, and 415-417; these read KLD and STG.

The protein belongs to the adenylosuccinate synthetase family. As to quaternary structure, homodimer. Requires Mg(2+) as cofactor.

It localises to the cytoplasm. It catalyses the reaction IMP + L-aspartate + GTP = N(6)-(1,2-dicarboxyethyl)-AMP + GDP + phosphate + 2 H(+). It functions in the pathway purine metabolism; AMP biosynthesis via de novo pathway; AMP from IMP: step 1/2. In terms of biological role, plays an important role in the de novo pathway of purine nucleotide biosynthesis. Catalyzes the first committed step in the biosynthesis of AMP from IMP. In Haemophilus influenzae (strain ATCC 51907 / DSM 11121 / KW20 / Rd), this protein is Adenylosuccinate synthetase.